Reading from the N-terminus, the 230-residue chain is MSENRTLMLNGMWNNNPALVQLLGLCPLLAVSSTVTNALGLGIATLLVLVGSNVTVSLVRDYVPKEVRIPVFVMIIASLVTCVQLLMNAYAYGLYLSLGIFIPLIVTNCIIIGRAEAFASKNDVLPAALDGFWMGLGMTSVLVVLGSLREIIGNGTLFDGADLLLGEWAKVLRIEVFHFDSAFLLALLPPGAFIGVGFLIAAKSVIDKQIAARQPKQQKQAIERARVTNV.

Residues 1-17 (MSENRTLMLNGMWNNNP) lie on the Cytoplasmic side of the membrane. The next 2 helical transmembrane spans lie at 18–38 (ALVQLLGLCPLLAVSSTVTNA) and 39–59 (LGLGIATLLVLVGSNVTVSLV). The Cytoplasmic portion of the chain corresponds to 60–68 (RDYVPKEVR). The chain crosses the membrane as a helical span at residues 69 to 89 (IPVFVMIIASLVTCVQLLMNA). The Periplasmic portion of the chain corresponds to 90–92 (YAY). The helical transmembrane segment at 93-113 (GLYLSLGIFIPLIVTNCIIIG) threads the bilayer. Residues 114-123 (RAEAFASKND) lie on the Cytoplasmic side of the membrane. A helical membrane pass occupies residues 124–144 (VLPAALDGFWMGLGMTSVLVV). Residues 145 to 181 (LGSLREIIGNGTLFDGADLLLGEWAKVLRIEVFHFDS) lie on the Periplasmic side of the membrane. The helical transmembrane segment at 182 to 202 (AFLLALLPPGAFIGVGFLIAA) threads the bilayer. At 203–230 (KSVIDKQIAARQPKQQKQAIERARVTNV) the chain is on the cytoplasmic side.

Belongs to the NqrDE/RnfAE family. The complex is composed of six subunits: RnfA, RnfB, RnfC, RnfD, RnfE and RnfG.

It is found in the cell inner membrane. Functionally, part of a membrane-bound complex that couples electron transfer with translocation of ions across the membrane. The sequence is that of Ion-translocating oxidoreductase complex subunit E from Vibrio cholerae serotype O1 (strain ATCC 39541 / Classical Ogawa 395 / O395).